Reading from the N-terminus, the 367-residue chain is Germination protease (367 aa).

Residues 1-13 constitute a propeptide that is removed on maturation; the sequence is MEEQQIPFQVRTD. The segment at 267–287 is disordered; it reads KDDPSKSLTPAGMSFGNRKLT.

This sequence belongs to the peptidase A25 family. Homotetramer. In terms of processing, autoproteolytically processed. The inactive tetrameric zymogen termed p46 autoprocesses to a smaller form termed p41, which is active only during spore germination.

The catalysed reaction is Endopeptidase action with P4 Glu or Asp, P1 preferably Glu &gt; Asp, P1' hydrophobic and P2' Ala.. Initiates the rapid degradation of small, acid-soluble proteins during spore germination. The chain is Germination protease from Oceanobacillus iheyensis (strain DSM 14371 / CIP 107618 / JCM 11309 / KCTC 3954 / HTE831).